The following is a 74-amino-acid chain: Mu-conotoxin-like T3.1 (74 aa).

An N-terminal signal peptide occupies residues 1–19 (MSKLGVLLTICLLLFPLTA). Positions 20 to 74 (LPMDGDEPADRPAERMQDNISSEQHPLFEERHGCCKGPEGCSSRECRPQHCCGRR) are excised as a propeptide. Intrachain disulfides connect Cys53–Cys65, Cys54–Cys70, and Cys60–Cys71. Position 57 is a 4-hydroxyproline (Pro57). Residues Glu58 and Glu64 each carry the 4-carboxyglutamate modification. Pro67 carries the post-translational modification 4-hydroxyproline. Cys71 carries the cysteine amide modification.

Belongs to the conotoxin M superfamily. In terms of tissue distribution, expressed by the venom duct.

Its subcellular location is the secreted. Its function is as follows. Mu-conotoxins block voltage-gated sodium channels (Nav). In vitro, this synthetic peptide displays a low blocking effect in mouse extensor digitorum longus muscles (IC(50)=616 nM). The polypeptide is Mu-conotoxin-like T3.1 (Conus tulipa (Fish-hunting cone snail)).